A 120-amino-acid chain; its full sequence is Large ribosomal subunit protein uL18 (120 aa).

This sequence belongs to the universal ribosomal protein uL18 family. In terms of assembly, part of the 50S ribosomal subunit; part of the 5S rRNA/L5/L18/L25 subcomplex. Contacts the 5S and 23S rRNAs.

In terms of biological role, this is one of the proteins that bind and probably mediate the attachment of the 5S RNA into the large ribosomal subunit, where it forms part of the central protuberance. This Synechococcus elongatus (strain ATCC 33912 / PCC 7942 / FACHB-805) (Anacystis nidulans R2) protein is Large ribosomal subunit protein uL18.